The following is a 252-amino-acid chain: Sulfate transporter CysZ (252 aa).

Helical transmembrane passes span 29–49, 66–86, 141–160, 164–186, and 212–232; these read FVLLPLIANVLLVGGALFYIF, FLSWLSYILWPLLVLTVLATF, LVYILPKAIGLFLLLLIPAL, VAPFLWFIFTAWMLAIQYADYPF, and ALVSVFTTIPVLNLIVMPVAV.

The protein belongs to the CysZ family.

It localises to the cell inner membrane. High affinity, high specificity proton-dependent sulfate transporter, which mediates sulfate uptake. Provides the sulfur source for the cysteine synthesis pathway. The sequence is that of Sulfate transporter CysZ from Vibrio atlanticus (strain LGP32) (Vibrio splendidus (strain Mel32)).